Reading from the N-terminus, the 128-residue chain is Photosystem II reaction center Psb28 protein (128 aa).

Positions 109-128 are disordered; sequence SGLGYSQDSGEAPASDSSNG. Residues 111–128 show a composition bias toward polar residues; sequence LGYSQDSGEAPASDSSNG.

It belongs to the Psb28 family. Part of the photosystem II complex.

It localises to the cellular thylakoid membrane. This chain is Photosystem II reaction center Psb28 protein, found in Synechococcus sp. (strain CC9311).